The chain runs to 65 residues: Small, acid-soluble spore protein Tlp (65 aa).

This sequence belongs to the Tlp family.

It is found in the spore core. The chain is Small, acid-soluble spore protein Tlp from Bacillus anthracis (strain A0248).